Consider the following 194-residue polypeptide: Inosine triphosphate pyrophosphatase (194 aa).

Residue 10-15 (TTNLKK) participates in ITP binding. Residue glutamate 36 coordinates Mg(2+). ITP-binding positions include lysine 48, 66 to 67 (DT), lysine 83, lysine 166, and 171 to 172 (HR).

Belongs to the HAM1 NTPase family. Homodimer. It depends on Mg(2+) as a cofactor. Mn(2+) is required as a cofactor.

It is found in the cytoplasm. The protein localises to the nucleus. It carries out the reaction ITP + H2O = IMP + diphosphate + H(+). It catalyses the reaction dITP + H2O = dIMP + diphosphate + H(+). The catalysed reaction is XTP + H2O = XMP + diphosphate + H(+). Functionally, pyrophosphatase that hydrolyzes non-canonical purine nucleotides such as inosine triphosphate (ITP), deoxyinosine triphosphate (dITP) or xanthosine 5'-triphosphate (XTP) to their respective monophosphate derivatives. The enzyme does not distinguish between the deoxy- and ribose forms. Probably excludes non-canonical purines from RNA and DNA precursor pools, thus preventing their incorporation into RNA and DNA and avoiding chromosomal lesions. In Encephalitozoon intestinalis (strain ATCC 50506) (Microsporidian parasite), this protein is Inosine triphosphate pyrophosphatase.